The following is a 242-amino-acid chain: Endothelial protein C receptor (242 aa).

The N-terminal stretch at 1-17 is a signal peptide; that stretch reads MLTKFLPLLLLLLPGCA. Over 18 to 214 the chain is Extracellular; that stretch reads LCNSDGSQSL…GSQTGRSYTS (197 aa). Residues N46, N63, N140, N166, and N176 are each glycosylated (N-linked (GlcNAc...) asparagine). 2 disulfide bridges follow: C119/C190 and C223/C236. Residues 215 to 235 traverse the membrane as a helical segment; the sequence is LVLGILMGCFIIAGVAVGIFM. Topologically, residues 236 to 242 are cytoplasmic; that stretch reads CTSGRRC.

In terms of tissue distribution, expressed in endothelial cells.

It is found in the membrane. Functionally, binds activated protein C. Enhances protein C activation by the thrombin-thrombomodulin complex; plays a role in the protein C pathway controlling blood coagulation. The protein is Endothelial protein C receptor (Procr) of Mus musculus (Mouse).